The following is a 426-amino-acid chain: MALRSITKLETFLKRYSAPTLYYCLHRSTQSSTCNSTNTDNGSHNTNYNSSNNNNNNNDNKRFSWRSAIRFLVPFSLGALASSVVAGDRELMPTISAKTLTNNRRDFNFIADVVASCADSVVYIEIKDTRHFDYFSGQPITASNGSGFVIEQNGLILTNAHVVINKPNTMVQVRLSDGRTFPATIEDVDQTSDLATLRIQVTNLSVMKLGKSSTLRSGEWVVALGSPLALSNTVTAGVISSTQRASQELGLRNRDINYLQTDAAITFGNSGGPLVNLDGEAIGVNSMKVTAGISFAIPIDYVKLFLERAAARRKKGSAYKTGYPVKRYMGITMLTLTPDILFELKSRTQNMPETLSHGVLVWKVIVGSPAHSGGLQPGDIVTHINKKEIKNSSDVYDALADGKKDLDMVILRGVKQMRVTITPEDP.

A compositionally biased stretch (low complexity) spans 31 to 58 (SSTCNSTNTDNGSHNTNYNSSNNNNNNN). Residues 31 to 59 (SSTCNSTNTDNGSHNTNYNSSNNNNNNND) form a disordered region. A helical transmembrane segment spans residues 71–87 (FLVPFSLGALASSVVAG). The IAP-binding signature appears at 79–82 (ALAS). Positions 143 to 306 (SNGSGFVIEQ…IPIDYVKLFL (164 aa)) are serine protease. Catalysis depends on charge relay system residues His-161, Asp-193, and Ser-270. The 86-residue stretch at 329 to 414 (MGITMLTLTP…DLDMVILRGV (86 aa)) folds into the PDZ domain.

It belongs to the peptidase S1C family. As to quaternary structure, interacts with th/DIAP1 (via BIR 2 domain).

Its subcellular location is the mitochondrion intermembrane space. The protein resides in the mitochondrion membrane. It carries out the reaction Cleavage of non-polar aliphatic amino-acids at the P1 position, with a preference for Val, Ile and Met. At the P2 and P3 positions, Arg is selected most strongly with a secondary preference for other hydrophilic residues.. In terms of biological role, serine protease that shows proteolytic activity against a non-specific substrate beta-casein. Promotes or induces cell death either by direct binding to and inhibition of BIRC proteins (also called inhibitor of apoptosis proteins, IAPs), leading to an increase in caspase activity, or by a BIRC inhibition-independent, caspase-independent and serine protease activity-dependent mechanism. Can antagonize antiapoptotic activity of th/Diap1 by directly inducing the degradation of th/Diap1. This Drosophila grimshawi (Hawaiian fruit fly) protein is Serine protease HTRA2, mitochondrial.